The primary structure comprises 359 residues: Heat-inducible transcription repressor HrcA (359 aa).

Belongs to the HrcA family.

Negative regulator of class I heat shock genes (grpE-dnaK-dnaJ and groELS operons). Prevents heat-shock induction of these operons. In Roseiflexus sp. (strain RS-1), this protein is Heat-inducible transcription repressor HrcA.